Reading from the N-terminus, the 253-residue chain is Tetraspanin-3 (253 aa).

The Cytoplasmic portion of the chain corresponds to 1–11 (MGQCGITSSKT). A helical transmembrane segment spans residues 12–32 (VLVFLNLIFWGAAGILCYVGA). Residues 33–50 (YVFITYDDYDHFFEDVYT) are Extracellular-facing. Residues 51-71 (LIPAVVIIAVGALLFIIGLIG) traverse the membrane as a helical segment. The Cytoplasmic portion of the chain corresponds to 72–85 (CCATIRESRCGLAT). A helical transmembrane segment spans residues 86–106 (FVIILLLVFVTEVVVVVLGYV). Over 107–212 (YRAKVENEVD…KKLQEIMMHV (106 aa)) the chain is Extracellular. N-linked (GlcNAc...) asparagine glycosylation is found at asparagine 127, asparagine 152, asparagine 167, and asparagine 183. A helical membrane pass occupies residues 213 to 233 (IWAALAFAAIQLLGMLCACIV). Over 234–253 (LCRRSRDPAYELLITGGTYA) the chain is Cytoplasmic.

Belongs to the tetraspanin (TM4SF) family. In terms of assembly, interacts with claudin-11/CLDN11 and integrins.

The protein resides in the membrane. Functionally, regulates the proliferation and migration of oligodendrocytes, a process essential for normal myelination and repair. The protein is Tetraspanin-3 (TSPAN3) of Homo sapiens (Human).